The primary structure comprises 347 residues: NADH-ubiquinone oxidoreductase chain 2 (347 aa).

10 helical membrane passes run 3–23, 25–45, 59–79, 96–116, 122–142, 149–169, 201–221, 239–259, 274–294, and 326–346; these read PMIF…VMMS, HWFM…PVLM, YFLT…INLM, MLIT…FWVP, IPLS…LSLL, INME…GWGG, SFLN…LLIF, IIAT…PLTG, NSTI…FFYI, and ILPL…FLML.

The protein belongs to the complex I subunit 2 family. As to quaternary structure, core subunit of respiratory chain NADH dehydrogenase (Complex I) which is composed of 45 different subunits. Interacts with TMEM242.

The protein resides in the mitochondrion inner membrane. It carries out the reaction a ubiquinone + NADH + 5 H(+)(in) = a ubiquinol + NAD(+) + 4 H(+)(out). In terms of biological role, core subunit of the mitochondrial membrane respiratory chain NADH dehydrogenase (Complex I) that is believed to belong to the minimal assembly required for catalysis. Complex I functions in the transfer of electrons from NADH to the respiratory chain. The immediate electron acceptor for the enzyme is believed to be ubiquinone. The protein is NADH-ubiquinone oxidoreductase chain 2 of Crocidura hildegardeae (Hildegarde's shrew).